The primary structure comprises 141 residues: MDRFYEVMFIVRPDLAEEEVDKIIASLEQTVTNGGGTIRSTEKMGRRKLAYLVRKFSEGNYILLTVDADGPLVAELERRLRVTEQVIKFITVRMDEEEKRLNKIKAIRASRTKVSDQPAAVEAAEAPAAPAAQEESAPASA.

The disordered stretch occupies residues 110 to 141 (SRTKVSDQPAAVEAAEAPAAPAAQEESAPASA). Positions 117-141 (QPAAVEAAEAPAAPAAQEESAPASA) are enriched in low complexity.

Belongs to the bacterial ribosomal protein bS6 family.

Its function is as follows. Binds together with bS18 to 16S ribosomal RNA. The protein is Small ribosomal subunit protein bS6 of Acidobacterium capsulatum (strain ATCC 51196 / DSM 11244 / BCRC 80197 / JCM 7670 / NBRC 15755 / NCIMB 13165 / 161).